The chain runs to 419 residues: O-methyltransferase gsfB (419 aa).

Residues 255–256, Asp278, 300–301, and Arg316 contribute to the S-adenosyl-L-methionine site; these read GG and DF. The active-site Proton acceptor is the His320.

It belongs to the class I-like SAM-binding methyltransferase superfamily. Cation-independent O-methyltransferase family.

The enzyme catalyses 2-(2,4-dihydroxy-6-oxidobenzoyl)-5-hydroxy-3-methylbenzenolate + S-adenosyl-L-methionine = griseophenone D + S-adenosyl-L-homocysteine + H(+). It functions in the pathway secondary metabolite biosynthesis; terpenoid biosynthesis. Its function is as follows. O-methyltransferase; part of the gene cluster that mediates the biosynthesis of griseofulvin, an important antifungal drug that has been in use for a long time for treating dermatophyte infections. The first step of the pathway is the formation of the heptaketide backbone by gsfA which is initiated by priming with acetyl-CoA, followed by sequential condensations of 6 malonyl-CoA units. The resulting benzophenone can undergo a spontaneous dehydration to form norlichexanthone. However, the true precursor for the griseofulvin biosynthesis is not norlichexanthone, but the heptaketide benzophenone that is O-methylated at 3-OH by gsfB to produce griseophenone D which is further methylated at 9-OH by gsfC to yield griseophenone C. Griseophenone C is then substrate of halogenase gsfI which is responsible for the regio-specific chlorination at the C13 position to form griseophenone B. The cytochrome P450 gsfF catalyzes the coupling of orcinol and phloroglucinol rings in griseophenone B to form desmethyl-dehydrogriseofulvin A which is further methylated at 5-OH by gsfD to yield dehydrogriseofulvin. Finally, gsfE performs stereospecific reduction of enone 18 of dehydrogriseofulvin to afford the final product griseofulvin. This Penicillium aethiopicum protein is O-methyltransferase gsfB.